Reading from the N-terminus, the 295-residue chain is Protoheme IX farnesyltransferase (295 aa).

7 consecutive transmembrane segments (helical) span residues 43-63, 92-112, 114-134, 140-160, 166-186, 231-251, and 272-292; these read PIQL…VAAL, SAFV…YALV, PLAA…YTPA, WSTE…WSAG, ALGW…FMAV, LLWG…GLWF, and FFAS…DRLF.

This sequence belongs to the UbiA prenyltransferase family. Protoheme IX farnesyltransferase subfamily.

It is found in the cell inner membrane. The enzyme catalyses heme b + (2E,6E)-farnesyl diphosphate + H2O = Fe(II)-heme o + diphosphate. It participates in porphyrin-containing compound metabolism; heme O biosynthesis; heme O from protoheme: step 1/1. In terms of biological role, converts heme B (protoheme IX) to heme O by substitution of the vinyl group on carbon 2 of heme B porphyrin ring with a hydroxyethyl farnesyl side group. This is Protoheme IX farnesyltransferase from Opitutus terrae (strain DSM 11246 / JCM 15787 / PB90-1).